The sequence spans 318 residues: Formimidoylglutamase (318 aa).

His-130, Asp-155, His-157, Asp-159, Asp-246, and Asp-248 together coordinate Mn(2+).

It belongs to the arginase family. It depends on Mn(2+) as a cofactor.

The catalysed reaction is N-formimidoyl-L-glutamate + H2O = formamide + L-glutamate. Its pathway is amino-acid degradation; L-histidine degradation into L-glutamate; L-glutamate from N-formimidoyl-L-glutamate (hydrolase route): step 1/1. In terms of biological role, catalyzes the conversion of N-formimidoyl-L-glutamate to L-glutamate and formamide. In Klebsiella pneumoniae subsp. pneumoniae (strain ATCC 700721 / MGH 78578), this protein is Formimidoylglutamase.